The sequence spans 95 residues: Large ribosomal subunit protein bL31 (95 aa).

The tract at residues 68 to 95 (AGLNNINKKPEKKKIQGKSEPRKSLNEL) is disordered. A compositionally biased stretch (basic and acidic residues) spans 80 to 95 (KKIQGKSEPRKSLNEL).

The protein belongs to the bacterial ribosomal protein bL31 family. Type A subfamily. In terms of assembly, part of the 50S ribosomal subunit.

Binds the 23S rRNA. This Ureaplasma parvum serovar 3 (strain ATCC 700970) protein is Large ribosomal subunit protein bL31.